The chain runs to 242 residues: Probable transcriptional regulatory protein BTH_I1015 (242 aa).

Belongs to the TACO1 family.

It localises to the cytoplasm. The sequence is that of Probable transcriptional regulatory protein BTH_I1015 from Burkholderia thailandensis (strain ATCC 700388 / DSM 13276 / CCUG 48851 / CIP 106301 / E264).